The chain runs to 462 residues: MDKKQLLRNLPKIDELLKEEIVNRYLQENSRTLVVDSLRQSIDHYRGEILKNNIDSFTKENVVNYFIDTLEENKSTKFKKVINATGVVIHTNLGRSLLAKEAIENVIKVSENYSNLEYDLKDGKRGSRYSHVEELIKKVTGAEAAMVVNNNAAAVMLALNTLCEGREAIVSRGQLVEIGGSFRIPDVMKFSRAHLVEVGTTNRTHLYDYENNINENTGVLLKVHTSNFKIMGFTEEVSSEEMVQLGGKYKLPVMEDIGSGTLVDFSKYGFTYEPTVQSSLEKGVDVVTFSGDKMLGGPQAGIIVGKKKYIDKMKKNQLTRALRIDKMTLAALEGTLKCYIDEKEAIENIPTLNMILSSKDIHKKRAQRLKRRLQNNVKDFNFKVSEDLSMVGGGSMPGERIPTYVVKVNSDKITAEKIEEKLRLSKNPIIVRVSKDEVILDVRTLFERDFNIIVEEFKKLLK.

Lys-293 carries the N6-(pyridoxal phosphate)lysine modification.

Belongs to the SelA family. Pyridoxal 5'-phosphate is required as a cofactor.

The protein localises to the cytoplasm. The enzyme catalyses L-seryl-tRNA(Sec) + selenophosphate + H(+) = L-selenocysteinyl-tRNA(Sec) + phosphate. It functions in the pathway aminoacyl-tRNA biosynthesis; selenocysteinyl-tRNA(Sec) biosynthesis; selenocysteinyl-tRNA(Sec) from L-seryl-tRNA(Sec) (bacterial route): step 1/1. In terms of biological role, converts seryl-tRNA(Sec) to selenocysteinyl-tRNA(Sec) required for selenoprotein biosynthesis. This chain is L-seryl-tRNA(Sec) selenium transferase, found in Clostridium botulinum (strain Okra / Type B1).